The chain runs to 166 residues: Phospholipase A2 inhibitor A1 (166 aa).

The signal sequence occupies residues 1–19 (MRLILLSGLLLLGIFLANG). A C-type lectin domain is found at 46–161 (LKGSFLIVHK…CDDNLLVVCE (116 aa)). 2 disulfides stabilise this stretch: C83–C160 and C138–C152. N-linked (GlcNAc...) asparagine glycosylation is present at N122.

It belongs to the alpha-type phospholipase A2 inhibitor family. Homotrimer; non-covalently linked. Expressed by the liver.

The protein resides in the secreted. Its function is as follows. This phospholipase A2 inhibitor binds directly phospholipase A2 in the presence or absence of calcium. This chain is Phospholipase A2 inhibitor A1, found in Bothrops neuwiedi (Neuwied's lancehead).